Here is a 238-residue protein sequence, read N- to C-terminus: Demethylmenaquinone methyltransferase (238 aa).

S-adenosyl-L-methionine contacts are provided by residues Thr65, Asp85, and 109 to 110; that span reads DA.

The protein belongs to the class I-like SAM-binding methyltransferase superfamily. MenG/UbiE family.

It catalyses the reaction a 2-demethylmenaquinol + S-adenosyl-L-methionine = a menaquinol + S-adenosyl-L-homocysteine + H(+). It participates in quinol/quinone metabolism; menaquinone biosynthesis; menaquinol from 1,4-dihydroxy-2-naphthoate: step 2/2. In terms of biological role, methyltransferase required for the conversion of demethylmenaquinol (DMKH2) to menaquinol (MKH2). The sequence is that of Demethylmenaquinone methyltransferase from Roseiflexus sp. (strain RS-1).